We begin with the raw amino-acid sequence, 700 residues long: Transketolase (700 aa).

Thr-2 is subject to N-acetylthreonine. His-45 provides a ligand contact to substrate. Thiamine diphosphate-binding positions include Thr-48, His-85, 133-135 (GPL), and Leu-135. Asp-177 is a Mg(2+) binding site. Residues Gly-178 and Asn-207 each coordinate thiamine diphosphate. Positions 207 and 209 each coordinate Mg(2+). Substrate contacts are provided by His-283, Arg-378, and Ser-405. Residue His-283 participates in thiamine diphosphate binding. The active-site Proton donor is the Glu-441. Phe-467 contacts thiamine diphosphate. His-491, Asp-499, and Arg-552 together coordinate substrate.

This sequence belongs to the transketolase family. Homodimer. Mg(2+) serves as cofactor. Ca(2+) is required as a cofactor. It depends on Mn(2+) as a cofactor. The cofactor is Co(2+). Requires thiamine diphosphate as cofactor.

It catalyses the reaction D-sedoheptulose 7-phosphate + D-glyceraldehyde 3-phosphate = aldehydo-D-ribose 5-phosphate + D-xylulose 5-phosphate. In terms of biological role, catalyzes the reversible transfer of a two-carbon ketol group from sedoheptulose-7-phosphate to glyceraldehyde-3-phosphate, producing xylulose-5-phosphate and ribose-5-phosphate. Catalyzes the transfer of a two-carbon ketol group from a ketose donor to an aldose acceptor, via a covalent intermediate with the cofactor thiamine pyrophosphate. This is Transketolase (tkt) from Mycobacterium tuberculosis (strain ATCC 25618 / H37Rv).